The primary structure comprises 212 residues: MKNVKIALTKGRLEKKAIEIFKTININTRELQDKGRKLIFNCENEEYNIELFLVKAKDVETYVEYGAADIGIVGKDTLMETNKEFYEVLDLNVGKCKFALAALPSFKLDQGYNRKKIATKYPNIAREYFRKKGMDVELIKIEGSVELGPIVGLADAIVDIVETGNTLRENGLVVVEDICEISARMIVNKASMKTKKDEIIKIIENVSEVIRQ.

The protein belongs to the ATP phosphoribosyltransferase family. Short subfamily. Heteromultimer composed of HisG and HisZ subunits.

The protein resides in the cytoplasm. The catalysed reaction is 1-(5-phospho-beta-D-ribosyl)-ATP + diphosphate = 5-phospho-alpha-D-ribose 1-diphosphate + ATP. It participates in amino-acid biosynthesis; L-histidine biosynthesis; L-histidine from 5-phospho-alpha-D-ribose 1-diphosphate: step 1/9. In terms of biological role, catalyzes the condensation of ATP and 5-phosphoribose 1-diphosphate to form N'-(5'-phosphoribosyl)-ATP (PR-ATP). Has a crucial role in the pathway because the rate of histidine biosynthesis seems to be controlled primarily by regulation of HisG enzymatic activity. The chain is ATP phosphoribosyltransferase from Clostridium botulinum (strain Langeland / NCTC 10281 / Type F).